We begin with the raw amino-acid sequence, 203 residues long: Small ribosomal subunit protein uS4 (203 aa).

The tract at residues 15–46 is disordered; sequence LGENIWGRPKSSVNRRSYGPGQHGQRRKSKVS. The region spanning 94-154 is the S4 RNA-binding domain; that stretch reads QRLDMVVYRA…KKAKEMALIA (61 aa).

The protein belongs to the universal ribosomal protein uS4 family. Part of the 30S ribosomal subunit. Contacts protein S5. The interaction surface between S4 and S5 is involved in control of translational fidelity.

Its function is as follows. One of the primary rRNA binding proteins, it binds directly to 16S rRNA where it nucleates assembly of the body of the 30S subunit. With S5 and S12 plays an important role in translational accuracy. The sequence is that of Small ribosomal subunit protein uS4 from Novosphingobium aromaticivorans (strain ATCC 700278 / DSM 12444 / CCUG 56034 / CIP 105152 / NBRC 16084 / F199).